The primary structure comprises 251 residues: Sugar fermentation stimulation protein homolog (251 aa).

The protein belongs to the SfsA family.

This chain is Sugar fermentation stimulation protein homolog, found in Symbiobacterium thermophilum (strain DSM 24528 / JCM 14929 / IAM 14863 / T).